A 296-amino-acid polypeptide reads, in one-letter code: MSKVGVIGAGKWGSALAFALSEKCEVYITSRTPRDMKNFVSLEEILRLEYLVIAIPAQQVSSWLREHFIYNNHKVLVAAKGIEATSGKFLNEIYEEHVPNEKIAFLSGPSFATEVMKSLPTALVINSINEELSAEFACFFPSFIKTYTSTDIAGAEVAGAYKNVIAIAAGICEGLGLGKNAAASLISRGLVEMQRFGKVYGAKDESFIGLSGAGDLFLTASSTMSRNFRVGLGIAEGKSKEQIVEELGEVAEGIGTTYALYSIAKEKDLYLPIAREVYYMLEGLDPHVSLRNFLSN.

NADPH contacts are provided by Trp12, Arg31, and Lys80. Sn-glycerol 3-phosphate-binding residues include Lys80, Gly108, and Ser110. Ala112 serves as a coordination point for NADPH. Lys162, Asp215, Ser225, Arg226, and Asn227 together coordinate sn-glycerol 3-phosphate. Catalysis depends on Lys162, which acts as the Proton acceptor. Position 226 (Arg226) interacts with NADPH. Positions 250 and 252 each coordinate NADPH.

It belongs to the NAD-dependent glycerol-3-phosphate dehydrogenase family.

Its subcellular location is the cytoplasm. It carries out the reaction sn-glycerol 3-phosphate + NAD(+) = dihydroxyacetone phosphate + NADH + H(+). It catalyses the reaction sn-glycerol 3-phosphate + NADP(+) = dihydroxyacetone phosphate + NADPH + H(+). It functions in the pathway membrane lipid metabolism; glycerophospholipid metabolism. Catalyzes the reduction of the glycolytic intermediate dihydroxyacetone phosphate (DHAP) to sn-glycerol 3-phosphate (G3P), the key precursor for phospholipid synthesis. The sequence is that of Glycerol-3-phosphate dehydrogenase [NAD(P)+] from Sulfurimonas denitrificans (strain ATCC 33889 / DSM 1251) (Thiomicrospira denitrificans (strain ATCC 33889 / DSM 1251)).